The primary structure comprises 529 residues: Tyrosinase (529 aa).

A signal peptide spans 1 to 18 (MFLFAMGLLLVILQPSTG). Residues 19 to 476 (QFPRVCANTQ…YLKQAHQIWP (458 aa)) are Lumenal, melanosome-facing. Asparagine 86, asparagine 111, and asparagine 161 each carry an N-linked (GlcNAc...) asparagine glycan. Positions 180, 202, and 211 each coordinate Cu cation. Residues asparagine 230 and asparagine 290 are each glycosylated (N-linked (GlcNAc...) asparagine). The segment at 293 to 313 (SEGPILRNPGNNDKSRTPRLP) is disordered. N-linked (GlcNAc...) asparagine glycosylation is found at asparagine 337 and asparagine 356. Histidine 363 and histidine 367 together coordinate Cu cation. The N-linked (GlcNAc...) asparagine glycan is linked to asparagine 371. Histidine 390 contributes to the Cu cation binding site. Residues 477–497 (WLVGAAVIGGIITAVLSGLIL) form a helical membrane-spanning segment. Residues 498 to 529 (ACRKKRKGTSPEIQPLLTESEDYNNVSYQSHF) are Cytoplasmic-facing.

This sequence belongs to the tyrosinase family. Requires Cu(2+) as cofactor.

The protein resides in the melanosome membrane. It localises to the melanosome. The catalysed reaction is 2 L-dopa + O2 = 2 L-dopaquinone + 2 H2O. It carries out the reaction L-tyrosine + O2 = L-dopaquinone + H2O. This is a copper-containing oxidase that functions in the formation of pigments such as melanins and other polyphenolic compounds. Catalyzes the initial and rate limiting step in the cascade of reactions leading to melanin production from tyrosine. In addition to hydroxylating tyrosine to DOPA (3,4-dihydroxyphenylalanine), also catalyzes the oxidation of DOPA to DOPA-quinone, and possibly the oxidation of DHI (5,6-dihydroxyindole) to indole-5,6 quinone. The protein is Tyrosinase (TYR) of Gallus gallus (Chicken).